A 116-amino-acid polypeptide reads, in one-letter code: Endocuticle structural glycoprotein ABD-4 (116 aa).

Pyrrolidone carboxylic acid is present on Gln1. The 73-residue stretch at Asp20 to Pro92 folds into the Chitin-binding type R&amp;R domain. The interval Glu78–Ala97 is disordered. O-linked (GalNAc) threonine; in ADB-4A, ABD-4B and ABD-4C glycosylation is present at Thr90. Thr107 carries an O-linked (GalNAc) threonine; in ADB-4A and ABD-4B glycan. An O-linked (GalNAc) threonine; in ADB-4A glycan is attached at Thr111. A Proline amide modification is found at Pro116.

3 variants exists that arise from a sequential glycosylation with N-acetylgalactosamine at three (ABD-4A), two (ABD-4B) or one (ABD-4C) threonine residues.

Component of the soft endocuticle of migratory locust. This is Endocuticle structural glycoprotein ABD-4 from Locusta migratoria (Migratory locust).